The chain runs to 213 residues: Probable nicotinate-nucleotide adenylyltransferase (213 aa).

This sequence belongs to the NadD family.

The enzyme catalyses nicotinate beta-D-ribonucleotide + ATP + H(+) = deamido-NAD(+) + diphosphate. Its pathway is cofactor biosynthesis; NAD(+) biosynthesis; deamido-NAD(+) from nicotinate D-ribonucleotide: step 1/1. Functionally, catalyzes the reversible adenylation of nicotinate mononucleotide (NaMN) to nicotinic acid adenine dinucleotide (NaAD). The protein is Probable nicotinate-nucleotide adenylyltransferase of Citrobacter koseri (strain ATCC BAA-895 / CDC 4225-83 / SGSC4696).